Here is an 83-residue protein sequence, read N- to C-terminus: Hainantoxin-III 7 (83 aa).

Positions 1-21 (MKASMFLALAGLVLLFVVGYA) are cleaved as a signal peptide. The propeptide occupies 22-48 (SESEEKEFPRELLSKVFAVDDFKGEER). 3 disulfide bridges follow: C50–C65, C57–C70, and C64–C77. Position 81 is a leucine amide (L81).

Belongs to the neurotoxin 10 (Hwtx-1) family. 15 (Hntx-3) subfamily. Monomer. As to expression, expressed by the venom gland.

The protein localises to the secreted. Functionally, selective antagonist of neuronal tetrodotoxin (TTX)-sensitive voltage-gated sodium channels (IC(50)=1270 nM on Nav1.1/SCN1A, 270 nM on Nav1.2/SCN2A, 491 nM on Nav1.3/SCN3A and 232 nM on Nav1.7/SCN9A). This toxin suppress Nav1.7 current amplitude without significantly altering the activation, inactivation, and repriming kinetics. Short extreme depolarizations partially activate the toxin-bound channel, indicating voltage-dependent inhibition of this toxin. This toxin increases the deactivation of the Nav1.7 current after extreme depolarizations. The toxin-Nav1.7 complex is gradually dissociated upon prolonged strong depolarizations in a voltage-dependent manner, and the unbound toxin rebinds to Nav1.7 after a long repolarization. Moreover, analysis of chimeric channels showed that the DIIS3-S4 linker is critical for toxin binding to Nav1.7. These data are consistent with this toxin interacting with Nav1.7 site 4 and trapping the domain II voltage sensor in the closed state. The protein is Hainantoxin-III 7 of Cyriopagopus hainanus (Chinese bird spider).